We begin with the raw amino-acid sequence, 124 residues long: Iron-sulfur cluster insertion protein ErpA (124 aa).

Residues Cys-52, Cys-116, and Cys-118 each coordinate iron-sulfur cluster.

The protein belongs to the HesB/IscA family. In terms of assembly, homodimer. Requires iron-sulfur cluster as cofactor.

Required for insertion of 4Fe-4S clusters for at least IspG. In Vibrio atlanticus (strain LGP32) (Vibrio splendidus (strain Mel32)), this protein is Iron-sulfur cluster insertion protein ErpA.